The following is a 301-amino-acid chain: tRNA pseudouridine synthase B (301 aa).

Asp-45 serves as the catalytic Nucleophile.

The protein belongs to the pseudouridine synthase TruB family. Type 1 subfamily.

The catalysed reaction is uridine(55) in tRNA = pseudouridine(55) in tRNA. Functionally, responsible for synthesis of pseudouridine from uracil-55 in the psi GC loop of transfer RNAs. In Streptomyces avermitilis (strain ATCC 31267 / DSM 46492 / JCM 5070 / NBRC 14893 / NCIMB 12804 / NRRL 8165 / MA-4680), this protein is tRNA pseudouridine synthase B.